Here is a 238-residue protein sequence, read N- to C-terminus: Uridylate kinase (238 aa).

Position 12 to 15 (12 to 15 (KLSG)) interacts with ATP. A UMP-binding site is contributed by G54. Residues G55 and R59 each coordinate ATP. UMP contacts are provided by residues D74 and 135–142 (TGNPYFTT). ATP contacts are provided by T162, N163, Y168, and D171.

The protein belongs to the UMP kinase family. In terms of assembly, homohexamer.

It is found in the cytoplasm. It catalyses the reaction UMP + ATP = UDP + ADP. It functions in the pathway pyrimidine metabolism; CTP biosynthesis via de novo pathway; UDP from UMP (UMPK route): step 1/1. Its activity is regulated as follows. Inhibited by UTP. Functionally, catalyzes the reversible phosphorylation of UMP to UDP. The polypeptide is Uridylate kinase (Bradyrhizobium sp. (strain BTAi1 / ATCC BAA-1182)).